Consider the following 921-residue polypeptide: Protein translocase subunit SecA (921 aa).

Residues Gln-87, 105–109, and Asp-515 each bind ATP; that span reads GEGKT. Positions 575–594 are disordered; that stretch reads RRIDNQLRGRSGRQGDPGSS. 4 residues coordinate Zn(2+): Cys-905, Cys-907, Cys-916, and Cys-917.

It belongs to the SecA family. Monomer and homodimer. Part of the essential Sec protein translocation apparatus which comprises SecA, SecYEG and auxiliary proteins SecDF-YajC and YidC. Zn(2+) is required as a cofactor.

It is found in the cell inner membrane. The protein localises to the cytoplasm. It carries out the reaction ATP + H2O + cellular proteinSide 1 = ADP + phosphate + cellular proteinSide 2.. In terms of biological role, part of the Sec protein translocase complex. Interacts with the SecYEG preprotein conducting channel. Has a central role in coupling the hydrolysis of ATP to the transfer of proteins into and across the cell membrane, serving both as a receptor for the preprotein-SecB complex and as an ATP-driven molecular motor driving the stepwise translocation of polypeptide chains across the membrane. In Polynucleobacter necessarius subsp. necessarius (strain STIR1), this protein is Protein translocase subunit SecA.